The following is a 467-amino-acid chain: Glutamate--tRNA ligase (467 aa).

The 'HIGH' region motif lies at 10–20 (PSPTGYLHVGG). A 'KMSKS' region motif is present at residues 238–242 (RLSKR). Lys241 contributes to the ATP binding site.

The protein belongs to the class-I aminoacyl-tRNA synthetase family. Glutamate--tRNA ligase type 1 subfamily. In terms of assembly, monomer.

It is found in the cytoplasm. It catalyses the reaction tRNA(Glu) + L-glutamate + ATP = L-glutamyl-tRNA(Glu) + AMP + diphosphate. Catalyzes the attachment of glutamate to tRNA(Glu) in a two-step reaction: glutamate is first activated by ATP to form Glu-AMP and then transferred to the acceptor end of tRNA(Glu). The chain is Glutamate--tRNA ligase from Citrifermentans bemidjiense (strain ATCC BAA-1014 / DSM 16622 / JCM 12645 / Bem) (Geobacter bemidjiensis).